Consider the following 459-residue polypeptide: Antizyme inhibitor 2 (459 aa).

Positions 117–140 (QVAQIKYAAKHGVRLLSFDNEVEL) are necessary for polyamine uptake stimulation.

This sequence belongs to the Orn/Lys/Arg decarboxylase class-II family. ODC antizyme inhibitor subfamily. Monomer. Interacts with OAZ1, OAZ2 and OAZ3; this interaction disrupts the interaction between the antizyme and ODC1. Does not form a heterodimer with ODC1. Post-translationally, ubiquitinated, leading to its proteasomal degradation; a process that is reduced in presence of antizymes. May also be degraded through the lysosomal degradative pathway in a proteasomal-independent manner. As to expression, expressed in the medulla and chromaffin cells of the adrenal gland. Expressed in the Langerhans islets of the pancreas. Expressed in the inner part of the seminiferous tubules and in spermatozoa located in the lumen of the epididymis of the testis. Expressed in the cortex, hippocampus and cerebellum of the brain. Expressed in normal and neoplastic mast cells (MC) (at protein level). Expressed in testis, pancreas and brain. Expressed throughout the differentiation process from spermatids to spermatozoa in the inner part of the seminiferous tubules. Expressed in the kidney: expressed in the superficial (Cs) and the deep layer (Cd) of the cortex region and in the outer stripe (OS), inner stripe (IS) and the inner medulla papilla (IM) of the medulla region.

It is found in the nucleus. It localises to the cytoplasm. The protein resides in the perinuclear region. Its subcellular location is the membrane. The protein localises to the cytoplasmic vesicle. It is found in the endoplasmic reticulum-Golgi intermediate compartment. It localises to the golgi apparatus. The protein resides in the cis-Golgi network. Its subcellular location is the trans-Golgi network. The protein localises to the cytoplasmic granule. It is found in the cell projection. It localises to the axon. The protein resides in the dendrite. Its subcellular location is the perikaryon. Functionally, antizyme inhibitor (AZI) protein that positively regulates ornithine decarboxylase (ODC) activity and polyamine uptake. AZI is an enzymatically inactive ODC homolog that counteracts the negative effect of ODC antizymes (AZs) OAZ1, OAZ2 and OAZ3 on ODC activity by competing with ODC for antizyme-binding. Inhibits antizyme-dependent ODC degradation and releases ODC monomers from their inactive complex with antizymes, leading to formation of the catalytically active ODC homodimer and restoring polyamine production. Participates in the morphological integrity of the trans-Golgi network (TGN) and functions as a regulator of intracellular secretory vesicle trafficking. The chain is Antizyme inhibitor 2 (Azin2) from Mus musculus (Mouse).